The primary structure comprises 151 residues: GTP-dependent dephospho-CoA kinase (151 aa).

Positions 30, 31, 49, 51, and 104 each coordinate GTP.

This sequence belongs to the GTP-dependent DPCK family.

It catalyses the reaction 3'-dephospho-CoA + GTP = GDP + CoA + H(+). Its pathway is cofactor biosynthesis; coenzyme A biosynthesis. Functionally, catalyzes the GTP-dependent phosphorylation of the 3'-hydroxyl group of dephosphocoenzyme A to form coenzyme A (CoA). The polypeptide is GTP-dependent dephospho-CoA kinase (Cenarchaeum symbiosum (strain A)).